Reading from the N-terminus, the 245-residue chain is Carboxy-S-adenosyl-L-methionine synthase (245 aa).

S-adenosyl-L-methionine-binding positions include tyrosine 42, glycine 67–serine 69, aspartate 92–asparagine 93, aspartate 120–isoleucine 121, asparagine 135, and arginine 202.

This sequence belongs to the class I-like SAM-binding methyltransferase superfamily. Cx-SAM synthase family. As to quaternary structure, homodimer.

It carries out the reaction prephenate + S-adenosyl-L-methionine = carboxy-S-adenosyl-L-methionine + 3-phenylpyruvate + H2O. Catalyzes the conversion of S-adenosyl-L-methionine (SAM) to carboxy-S-adenosyl-L-methionine (Cx-SAM). This Vibrio campbellii (strain ATCC BAA-1116) protein is Carboxy-S-adenosyl-L-methionine synthase.